The sequence spans 349 residues: Peroxidase C3 (349 aa).

Residues 1–29 (MGFSPLISCSAMGALILSCLLLQASNSNA) form the signal peptide. Disulfide bonds link Cys40–Cys120, Cys73–Cys78, Cys126–Cys329, and Cys206–Cys238. Catalysis depends on His71, which acts as the Proton acceptor. Residues Asp72, Val75, Gly77, Asp79, and Ser81 each coordinate Ca(2+). Residue Asn86 is glycosylated (N-linked (GlcNAc...) asparagine). Position 168 (Pro168) interacts with substrate. His199 is a heme b binding site. Thr200 provides a ligand contact to Ca(2+). Asn217 and Asn243 each carry an N-linked (GlcNAc...) asparagine glycan. Ca(2+)-binding residues include Asp251, Thr254, and Asp259.

The protein belongs to the peroxidase family. Classical plant (class III) peroxidase subfamily. The cofactor is Ca(2+). It depends on heme b as a cofactor.

The protein resides in the secreted. It localises to the vacuole. The catalysed reaction is 2 a phenolic donor + H2O2 = 2 a phenolic radical donor + 2 H2O. Functionally, removal of H(2)O(2), oxidation of toxic reductants, biosynthesis and degradation of lignin, suberization, auxin catabolism, response to environmental stresses such as wounding, pathogen attack and oxidative stress. These functions might be dependent on each isozyme/isoform in each plant tissue. In Armoracia rusticana (Horseradish), this protein is Peroxidase C3 (PRXC3).